The chain runs to 422 residues: Histidine--tRNA ligase (422 aa).

It belongs to the class-II aminoacyl-tRNA synthetase family. Homodimer.

It localises to the cytoplasm. It catalyses the reaction tRNA(His) + L-histidine + ATP = L-histidyl-tRNA(His) + AMP + diphosphate + H(+). In Nocardia farcinica (strain IFM 10152), this protein is Histidine--tRNA ligase.